A 395-amino-acid chain; its full sequence is Protein pelota (395 aa).

A PGF motif motif is present at residues 210–212 (PGF). The interval 371–395 (PELEDSDDDDDEDGAAGGVADSDSD) is disordered. Positions 372–384 (ELEDSDDDDDEDG) are enriched in acidic residues.

This sequence belongs to the eukaryotic release factor 1 family. Pelota subfamily. As to quaternary structure, component of the Pelota-HBS1L complex, also named Dom34-Hbs1 complex, composed of pelo and HBS1. Interacts with Pink1 and Cnot4; the interaction with Cnot4 appears to be Pink1-dependent. A divalent metal cation serves as cofactor. Expressed in ovaries and muscles (at protein level). Expressed throughout all development stages.

It localises to the nucleus. It is found in the cytoplasm. Its function is as follows. Component of the Pelota-HBS1L complex, a complex that recognizes stalled ribosomes and triggers the No-Go Decay (NGD) pathway. In the Pelota-HBS1L complex, pelo recognizes ribosomes stalled at the 3' end of an mRNA and engages stalled ribosomes by destabilizing mRNA in the mRNA channel. Following ribosome-binding, the Pelota-HBS1L complex promotes recruitment of pix, which drives the disassembly of stalled ribosomes, followed by degradation of damaged mRNAs as part of the NGD pathway. Required prior to the first meiotic division for spindle formation and nuclear envelope breakdown during spermatogenesis. Together with HBS1, promotes spermatid individualization during spermatogenesis. Required for ovarian germ line stem cell self-renewal and oocyte development during oogenesis. Together with HSB1, required for transposon silencing in the ovary and testis. As part of the Pink1-regulated signaling, is recruited to damaged mitochondrial and is required for recruitment of autophagy receptors and induction of mitophagy. Required for normal eye patterning and for mitotic divisions in the ovary. This chain is Protein pelota (pelo), found in Drosophila melanogaster (Fruit fly).